Consider the following 307-residue polypeptide: Lipid droplet-associated hydrolase (307 aa).

The active-site Nucleophile is the Ser119. The tract at residues 157 to 200 (GWVFTKVAMPLYSVFGYIFFSFFNFLPVWLRLMLIQIYFLIFSI) is potential amphipathic helix required for binding to lipid droplets. 2 helical membrane passes run 166-186 (PLYS…PVWL) and 188-208 (LMLI…LGTA). Residues Asp254 and His283 each act as charge relay system in the active site.

Belongs to the AB hydrolase superfamily. LDAH family. In terms of assembly, interacts with the juvenile hormone hydrolase enzymes Jheh1 and Jheh2. Also interacts with Hmu, Cpr, Gp93 and Pvr. Expressed in accessory glands.

It localises to the lipid droplet. Its subcellular location is the endoplasmic reticulum membrane. It carries out the reaction a cholesterol ester + H2O = cholesterol + a fatty acid + H(+). Functionally, probable serine lipid hydrolase associated with lipid droplets. Appears to lack or have very low cholesterol esterase activity. Appears to lack triglyceride lipase activity. Involved in cholesterol and triglyceride homeostasis; stimulates cellular triglyceride accumulation and cellular cholesterol release. Involved in negatively regulating juvenile hormone (JH) and possibly, insulin signaling activities such as triacylglycerols (TAG) storage, and thereby plays a role in the endocrine regulation of organismal growth and survival. Likely functions by enhancing the activity of the JH hydrolase enzymes Jheh1 and Jheh2. Required for lipid droplet positioning and fat storage. This Drosophila melanogaster (Fruit fly) protein is Lipid droplet-associated hydrolase.